A 485-amino-acid chain; its full sequence is Katanin p60 ATPase-containing subunit A1 (485 aa).

Residues 101-173 (HRSSPCVVRK…KNKAEAVETE (73 aa)) are disordered. Over residues 141-173 (NGDKGKPQKSKEKKENPSKPKEDKNKAEAVETE) the composition is skewed to basic and acidic residues. Residue 244–251 (GPPGTGKT) coordinates ATP.

This sequence belongs to the AAA ATPase family. Katanin p60 subunit A1 subfamily. Can homooligomerize into hexameric rings, which may be promoted by interaction with microtubules. Interacts with katnb1, which may serve as a targeting subunit.

It localises to the cytoplasm. Its subcellular location is the cytoskeleton. The protein localises to the microtubule organizing center. The protein resides in the centrosome. It is found in the spindle pole. It localises to the spindle. The catalysed reaction is n ATP + n H2O + a microtubule = n ADP + n phosphate + (n+1) alpha/beta tubulin heterodimers.. With respect to regulation, ATPase activity is stimulated by microtubules, which promote homooligomerization. ATP-dependent microtubule severing is stimulated by interaction with katnb1. Catalytic subunit of a complex which severs microtubules in an ATP-dependent manner. Microtubule severing may promote rapid reorganization of cellular microtubule arrays and the release of microtubules from the centrosome following nucleation. The chain is Katanin p60 ATPase-containing subunit A1 (katna1) from Danio rerio (Zebrafish).